Consider the following 241-residue polypeptide: Transmembrane protein 176A (241 aa).

At S38 the chain carries Phosphoserine. A run of 4 helical transmembrane segments spans residues W65–F85, S93–Y113, L127–F147, and L193–L213.

It belongs to the TMEM176 family. As to quaternary structure, interacts with MCOLN2.

The protein resides in the membrane. This Bos taurus (Bovine) protein is Transmembrane protein 176A (TMEM176A).